The chain runs to 76 residues: Contulakin-G (76 aa).

The N-terminal stretch at 1-22 (MQTAYWVMVMMMVWIAAPLSEG) is a signal peptide. Residues 23–50 (GKLNDVIRGLVPDDITPQLILGSLISRR) constitute a propeptide that is removed on maturation. Q51 carries the post-translational modification Pyrrolidone carboxylic acid. The tract at residues 51–76 (QSEEGGSNATKKPYILRASDQVASGP) is disordered. O-linked (GalNAc...) threonine glycosylation occurs at T60. Residues 67–76 (RASDQVASGP) constitute a propeptide that is removed on maturation.

The protein belongs to the conotoxin C superfamily. In terms of processing, O-glycosylated. The glycosylation seems to enhance the affinity to the neurotensin receptors. Expressed by the venom duct.

Its subcellular location is the secreted. In terms of biological role, acts as an agonist of neurotensin receptors. It binds to human neurotensin type 1 receptor (NTSR1), rat neurotensin types 1 and 2 receptors (NTSR1/NTSR2) and mouse neurotensin type 3 receptor (SORT1). This Conus geographus (Geography cone) protein is Contulakin-G.